A 375-amino-acid polypeptide reads, in one-letter code: Cytochrome P450 monooxygenase ACRTS1 (375 aa).

Residue cysteine 321 coordinates heme.

It belongs to the cytochrome P450 family. The cofactor is heme.

Its pathway is mycotoxin biosynthesis. Cytochrome P450 monooxygenase; part of the gene cluster that mediates the biosynthesis of the host-selective toxins (HSTs) ACR-toxins responsible for brown spot of rough lemon disease by the rough lemon pathotype. ACR-toxins cause uncoupling of mitochondrial oxidative-phosphorylation similar to that of classic protonophore. The structure of the major form of ACR-toxin (ACR-toxin I) consists of an alpha-dihydropyrone ring in a 19-carbon polyalcohol, a typical polyketide structure. Minor toxins were characterized as having a pyrone ring with polyalcohol side chains different in length and showing weaker toxicity. The highly reducing polyketide synthase ACRTS2 has all necessary enzymatic domains for multiple cycles of condensation and beta-keto processing. The cytochrome P450 monooxygenase ACRTS1 has also been shown to be essential for ACR-toxin biosynthesis, however its exact role in the pathway has not been elucidated yet. This is Cytochrome P450 monooxygenase ACRTS1 from Alternaria alternata (Alternaria rot fungus).